Here is a 161-residue protein sequence, read N- to C-terminus: D-amino-acid N-acetyltransferase HPA3 (161 aa).

Serine 2 is modified (N-acetylserine). The N-acetyltransferase domain occupies 14–161; the sequence is IVVKAIEPKD…DKVLYKRNGY (148 aa). Position 98 to 111 (98 to 111) interacts with acetyl-CoA; that stretch reads LYVTERARVKGVGR.

The protein belongs to the acetyltransferase family. GNAT subfamily. In terms of processing, autoacetylates in an intermolecular reaction.

The protein resides in the cytoplasm. It is found in the nucleus. The catalysed reaction is a D-alpha-amino acid + acetyl-CoA = an N-acetyl-D-amino acid + CoA + H(+). In terms of biological role, N-acetyltransferase that acts on a wide range of D-amino acids. Catalyzes the N-acetylation through an ordered bi-bi mechanism, in which acetyl-CoA is the first substrate to be bound and CoA is the last product to be liberated. D-amino acids are toxic for the cell and their N-acetylation, preceding removal from cells, plays an important role in detoxification of D-amino acids. In vitro, capable of acetylating histone H4 at 'Lys-8' and polyamines like putrescine, spermidine and spermine. The protein is D-amino-acid N-acetyltransferase HPA3 of Saccharomyces cerevisiae (strain ATCC 204508 / S288c) (Baker's yeast).